The chain runs to 428 residues: Enolase (428 aa).

Glutamine 163 contacts (2R)-2-phosphoglycerate. The Proton donor role is filled by glutamate 205. Positions 242, 285, and 312 each coordinate Mg(2+). (2R)-2-phosphoglycerate-binding residues include lysine 337, arginine 366, serine 367, and lysine 388. The active-site Proton acceptor is the lysine 337.

The protein belongs to the enolase family. The cofactor is Mg(2+).

Its subcellular location is the cytoplasm. The protein localises to the secreted. It localises to the cell surface. It catalyses the reaction (2R)-2-phosphoglycerate = phosphoenolpyruvate + H2O. It functions in the pathway carbohydrate degradation; glycolysis; pyruvate from D-glyceraldehyde 3-phosphate: step 4/5. Its function is as follows. Catalyzes the reversible conversion of 2-phosphoglycerate (2-PG) into phosphoenolpyruvate (PEP). It is essential for the degradation of carbohydrates via glycolysis. This Finegoldia magna (strain ATCC 29328 / DSM 20472 / WAL 2508) (Peptostreptococcus magnus) protein is Enolase.